A 222-amino-acid chain; its full sequence is Small ribosomal subunit protein eS1 (222 aa).

It belongs to the eukaryotic ribosomal protein eS1 family.

The chain is Small ribosomal subunit protein eS1 from Pyrobaculum neutrophilum (strain DSM 2338 / JCM 9278 / NBRC 100436 / V24Sta) (Thermoproteus neutrophilus).